We begin with the raw amino-acid sequence, 339 residues long: Biotin synthase (339 aa).

One can recognise a Radical SAM core domain in the interval N55–R282. [4Fe-4S] cluster contacts are provided by C70, C74, and C77. C114, C145, C205, and R277 together coordinate [2Fe-2S] cluster.

It belongs to the radical SAM superfamily. Biotin synthase family. Homodimer. Requires [4Fe-4S] cluster as cofactor. [2Fe-2S] cluster is required as a cofactor.

It catalyses the reaction (4R,5S)-dethiobiotin + (sulfur carrier)-SH + 2 reduced [2Fe-2S]-[ferredoxin] + 2 S-adenosyl-L-methionine = (sulfur carrier)-H + biotin + 2 5'-deoxyadenosine + 2 L-methionine + 2 oxidized [2Fe-2S]-[ferredoxin]. It functions in the pathway cofactor biosynthesis; biotin biosynthesis; biotin from 7,8-diaminononanoate: step 2/2. In terms of biological role, catalyzes the conversion of dethiobiotin (DTB) to biotin by the insertion of a sulfur atom into dethiobiotin via a radical-based mechanism. The chain is Biotin synthase from Burkholderia ambifaria (strain ATCC BAA-244 / DSM 16087 / CCUG 44356 / LMG 19182 / AMMD) (Burkholderia cepacia (strain AMMD)).